The primary structure comprises 305 residues: Protoheme IX farnesyltransferase (305 aa).

9 helical membrane passes run 31 to 51 (VMSLVIFTGFVGMWLAPYSVH), 52 to 72 (PFIAGIAVVCIALGAGSAGAI), 96 to 118 (VIESDEALSFGLITGFFAVFFMA), 123 to 145 (LLASFLLLFTIFYYICIYTIWLK), 151 to 171 (NIVIGGVSGALPPVIGYAAVS), 179 to 199 (IILFLIIFIWTPPHSWALALF), 225 to 245 (ILIYSILLFIVSLMPFFIGMN), 247 to 267 (FIYLIISGILGVVFLYYAGSL), and 281 to 301 (FAYSIFYLFFIFLLLYSTNTI).

Belongs to the UbiA prenyltransferase family. Protoheme IX farnesyltransferase subfamily.

The protein localises to the cell membrane. It carries out the reaction heme b + (2E,6E)-farnesyl diphosphate + H2O = Fe(II)-heme o + diphosphate. It participates in porphyrin-containing compound metabolism; heme O biosynthesis; heme O from protoheme: step 1/1. Functionally, converts heme B (protoheme IX) to heme O by substitution of the vinyl group on carbon 2 of heme B porphyrin ring with a hydroxyethyl farnesyl side group. This chain is Protoheme IX farnesyltransferase, found in Rickettsia africae (strain ESF-5).